The following is a 30-amino-acid chain: Cyclotide psyleio E (30 aa).

Residues 1-30 (SVTPIVCGETCFGGTCNTPGCSCSWPICTK) constitute a cross-link (cyclopeptide (Ser-Lys)). 3 disulfide bridges follow: cysteine 7-cysteine 21, cysteine 11-cysteine 23, and cysteine 16-cysteine 28.

In terms of processing, this is a cyclic peptide.

In terms of biological role, probably participates in a plant defense mechanism. This chain is Cyclotide psyleio E, found in Psychotria leiocarpa.